The sequence spans 540 residues: 2,3-bisphosphoglycerate-independent phosphoglycerate mutase (540 aa).

The Mn(2+) site is built by Asp-25 and Ser-75. The Phosphoserine intermediate role is filled by Ser-75. Residues His-136, Arg-166–Asp-167, Arg-198, Arg-204, Arg-269–Arg-272, and Lys-342 contribute to the substrate site. Residues Asp-409, His-413, Asp-450, His-451, and His-468 each coordinate Mn(2+).

Belongs to the BPG-independent phosphoglycerate mutase family. Monomer. Mn(2+) is required as a cofactor.

It catalyses the reaction (2R)-2-phosphoglycerate = (2R)-3-phosphoglycerate. Its pathway is carbohydrate degradation; glycolysis; pyruvate from D-glyceraldehyde 3-phosphate: step 3/5. Functionally, catalyzes the interconversion of 2-phosphoglycerate and 3-phosphoglycerate. This Prochlorococcus marinus subsp. pastoris (strain CCMP1986 / NIES-2087 / MED4) protein is 2,3-bisphosphoglycerate-independent phosphoglycerate mutase.